We begin with the raw amino-acid sequence, 399 residues long: Tyrosine--tRNA ligase 2 (399 aa).

The 'HIGH' region signature appears at 43 to 52 (PTAPDLHLGH). Positions 227–231 (KMSKS) match the 'KMSKS' region motif. Residue Lys230 participates in ATP binding. Positions 338-398 (ITLLDLCSVA…IGKRYKFRIG (61 aa)) constitute an S4 RNA-binding domain.

Belongs to the class-I aminoacyl-tRNA synthetase family. TyrS type 2 subfamily. As to quaternary structure, homodimer.

The protein localises to the cytoplasm. It catalyses the reaction tRNA(Tyr) + L-tyrosine + ATP = L-tyrosyl-tRNA(Tyr) + AMP + diphosphate + H(+). Its function is as follows. Catalyzes the attachment of tyrosine to tRNA(Tyr) in a two-step reaction: tyrosine is first activated by ATP to form Tyr-AMP and then transferred to the acceptor end of tRNA(Tyr). The protein is Tyrosine--tRNA ligase 2 of Photorhabdus laumondii subsp. laumondii (strain DSM 15139 / CIP 105565 / TT01) (Photorhabdus luminescens subsp. laumondii).